Reading from the N-terminus, the 247-residue chain is Phosphatidylserine decarboxylase proenzyme (247 aa).

The active-site Schiff-base intermediate with substrate; via pyruvic acid is the S206. Residue S206 is modified to Pyruvic acid (Ser); by autocatalysis.

Belongs to the phosphatidylserine decarboxylase family. PSD-A subfamily. As to quaternary structure, heterodimer of a large membrane-associated beta subunit and a small pyruvoyl-containing alpha subunit. It depends on pyruvate as a cofactor. In terms of processing, is synthesized initially as an inactive proenzyme. Formation of the active enzyme involves a self-maturation process in which the active site pyruvoyl group is generated from an internal serine residue via an autocatalytic post-translational modification. Two non-identical subunits are generated from the proenzyme in this reaction, and the pyruvate is formed at the N-terminus of the alpha chain, which is derived from the carboxyl end of the proenzyme. The post-translation cleavage follows an unusual pathway, termed non-hydrolytic serinolysis, in which the side chain hydroxyl group of the serine supplies its oxygen atom to form the C-terminus of the beta chain, while the remainder of the serine residue undergoes an oxidative deamination to produce ammonia and the pyruvoyl prosthetic group on the alpha chain.

It localises to the cell membrane. The catalysed reaction is a 1,2-diacyl-sn-glycero-3-phospho-L-serine + H(+) = a 1,2-diacyl-sn-glycero-3-phosphoethanolamine + CO2. The protein operates within phospholipid metabolism; phosphatidylethanolamine biosynthesis; phosphatidylethanolamine from CDP-diacylglycerol: step 2/2. Its function is as follows. Catalyzes the formation of phosphatidylethanolamine (PtdEtn) from phosphatidylserine (PtdSer). This Nitrobacter winogradskyi (strain ATCC 25391 / DSM 10237 / CIP 104748 / NCIMB 11846 / Nb-255) protein is Phosphatidylserine decarboxylase proenzyme.